A 352-amino-acid chain; its full sequence is Biotin synthase (352 aa).

One can recognise a Radical SAM core domain in the interval 44–262 (NRVQVSTLLS…LAVARIMMPK (219 aa)). Cys59, Cys63, and Cys66 together coordinate [4Fe-4S] cluster. [2Fe-2S] cluster-binding residues include Cys103, Cys134, Cys194, and Arg266.

Belongs to the radical SAM superfamily. Biotin synthase family. In terms of assembly, homodimer. The cofactor is [4Fe-4S] cluster. [2Fe-2S] cluster is required as a cofactor.

It catalyses the reaction (4R,5S)-dethiobiotin + (sulfur carrier)-SH + 2 reduced [2Fe-2S]-[ferredoxin] + 2 S-adenosyl-L-methionine = (sulfur carrier)-H + biotin + 2 5'-deoxyadenosine + 2 L-methionine + 2 oxidized [2Fe-2S]-[ferredoxin]. The protein operates within cofactor biosynthesis; biotin biosynthesis; biotin from 7,8-diaminononanoate: step 2/2. In terms of biological role, catalyzes the conversion of dethiobiotin (DTB) to biotin by the insertion of a sulfur atom into dethiobiotin via a radical-based mechanism. The chain is Biotin synthase from Pseudomonas paraeruginosa (strain DSM 24068 / PA7) (Pseudomonas aeruginosa (strain PA7)).